The sequence spans 414 residues: CinA-like protein (414 aa).

This sequence belongs to the CinA family.

The protein is CinA-like protein of Geobacter sp. (strain M21).